The sequence spans 428 residues: MENPYEITAIVAREILDSRGNPTVEVDVHTPIAMGRAAVPSGASTGTHEAVELRDGGKRYHGKGVRRAVENVNKIIAPELIGMDVRWQREIDKLLIELDGTENKSNLGANAILAVSLAVAKAAANSLELPLYQYLGGVNAYVLPVPLSNVINGGVHAGNELDFQEFMIMPIGASSFREAIRWVSETYHVLKRVIMGKYGKNAVNVGDEGGFAPPMKEVTEPLDALIKAIEEAGYKPGDEIALAIDAASSEFFKDGKYIVGGKEYTREELLDLYKELVSTYPIVSIEDPFHEEDWEGFVMITNELGKKIQIVGDDLFVTNPRRLKKGIELGAANALLLKVNQIGTLTEAMDAAYTAFRAGYSVIVSHRSGETEDTTIADLAVALNAGQIKTGAPARSDRNAKYNQLIRIEEELEGIAVYAGKNFRKVFF.

Q164 is a (2R)-2-phosphoglycerate binding site. E208 acts as the Proton donor in catalysis. Mg(2+) contacts are provided by D245, E286, and D313. Residues K338, R367, S368, and K389 each contribute to the (2R)-2-phosphoglycerate site. K338 (proton acceptor) is an active-site residue.

This sequence belongs to the enolase family. Mg(2+) is required as a cofactor.

It is found in the cytoplasm. The protein resides in the secreted. It localises to the cell surface. It carries out the reaction (2R)-2-phosphoglycerate = phosphoenolpyruvate + H2O. Its pathway is carbohydrate degradation; glycolysis; pyruvate from D-glyceraldehyde 3-phosphate: step 4/5. Catalyzes the reversible conversion of 2-phosphoglycerate (2-PG) into phosphoenolpyruvate (PEP). It is essential for the degradation of carbohydrates via glycolysis. The polypeptide is Enolase (Pyrococcus horikoshii (strain ATCC 700860 / DSM 12428 / JCM 9974 / NBRC 100139 / OT-3)).